The following is a 167-amino-acid chain: Putative peroxiredoxin-A (167 aa).

The Thioredoxin domain maps to 4 to 167 (IKRGDRFPTT…STAQKIIAKL (164 aa)). C53 acts as the Cysteine sulfenic acid (-SOH) intermediate in catalysis. Residues 165–167 (AKL) carry the Microbody targeting signal motif.

The protein belongs to the peroxiredoxin family. Prx5 subfamily.

It is found in the peroxisome membrane. The enzyme catalyses a hydroperoxide + [thioredoxin]-dithiol = an alcohol + [thioredoxin]-disulfide + H2O. Its function is as follows. Thiol-specific peroxidase that catalyzes the reduction of hydrogen peroxide and organic hydroperoxides to water and alcohols, respectively. Plays a role in cell protection against oxidative stress by detoxifying peroxides and as sensor of hydrogen peroxide-mediated signaling events. This Candida boidinii (Yeast) protein is Putative peroxiredoxin-A (PMPA).